A 506-amino-acid chain; its full sequence is MSDVQEATNQLLDVNLCENQMSIQVTESGPRSESEHLQVTIGATVPTGFEQTAADEVREKLGSSCKISKDRGKIYFDITVDSLAQVHCLRSVDNLFVVVQEFKDYQFKETKEEVLKDFEELAGKLPWSDPLKIWKINTCFKKKKTKRRKLNPNSSKQKIDNGRGDTTVEKDVKKELTNSVSDSQISDYYENPAIKEQVSTLIGDGLTSCKDETEENSKEEADPEVLKFRVTCNRAGEKHCFSSNEAARDFGGAVQDYFKWKADMTNFDVEVLLNIHDNEVVVGIALTEESLHRRNITHFGPTTLRSTLAYGMLRLCAPQPTDIIVDPMCGTGAIPIEGATEWSNCYHIAGDNNPLAVNRAANNISSLLTKIQVKEGKLPLGLPIDTIQWDICNLPLRTGSVDIIVTDMPFGKRMGSKKRNWNLYPACLREMSRVCRPGTGRAVLLTQDKKCFAKALSGMGHLWRKVHTVWVNIGGLHAAVYLLKRTPQSFVHPSEEDGERCPCTQR.

Residues 144 to 172 (KTKRRKLNPNSSKQKIDNGRGDTTVEKDV) are disordered. A compositionally biased stretch (basic and acidic residues) spans 157–172 (QKIDNGRGDTTVEKDV). The 117-residue stretch at 170-286 (KDVKKELTNS…DNEVVVGIAL (117 aa)) folds into the THUMP domain.

The protein belongs to the methyltransferase superfamily. As to quaternary structure, part of the heterodimeric THUMPD3-TRM112 methyltransferase complex; this complex forms an active tRNA methyltransferase, where TRMT112 acts as an activator of the catalytic subunit THUMPD3.

It localises to the cytoplasm. It catalyses the reaction guanosine(6) in tRNA + S-adenosyl-L-methionine = N(2)-methylguanosine(6) in tRNA + S-adenosyl-L-homocysteine + H(+). The catalysed reaction is guanosine(7) in tRNA + S-adenosyl-L-methionine = N(2)-methylguanosine(7) in tRNA + S-adenosyl-L-homocysteine + H(+). Its function is as follows. Catalytic subunit of the THUMPD3-TRM112 methyltransferase complex, that specifically mediates the S-adenosyl-L-methionine-dependent N(2)-methylation of guanosine nucleotide at position 6 (m2G6) in tRNAs. This is one of the major tRNA (guanine-N(2))-methyltransferases. Also catalyzes the S-adenosyl-L-methionine-dependent N(2)-methylation of guanosine nucleotide at position 7 of tRNA(Trp). This Bos taurus (Bovine) protein is tRNA (guanine(6)-N(2))-methyltransferase THUMP3.